The chain runs to 188 residues: ATP synthase subunit b (188 aa).

A helical transmembrane segment spans residues 24–44; that stretch reads LPASYDIVWSLVVFIIVLILF.

It belongs to the ATPase B chain family. As to quaternary structure, F-type ATPases have 2 components, F(1) - the catalytic core - and F(0) - the membrane proton channel. F(1) has five subunits: alpha(3), beta(3), gamma(1), delta(1), epsilon(1). F(0) has three main subunits: a(1), b(2) and c(10-14). The alpha and beta chains form an alternating ring which encloses part of the gamma chain. F(1) is attached to F(0) by a central stalk formed by the gamma and epsilon chains, while a peripheral stalk is formed by the delta and b chains.

The protein resides in the cell membrane. F(1)F(0) ATP synthase produces ATP from ADP in the presence of a proton or sodium gradient. F-type ATPases consist of two structural domains, F(1) containing the extramembraneous catalytic core and F(0) containing the membrane proton channel, linked together by a central stalk and a peripheral stalk. During catalysis, ATP synthesis in the catalytic domain of F(1) is coupled via a rotary mechanism of the central stalk subunits to proton translocation. Functionally, component of the F(0) channel, it forms part of the peripheral stalk, linking F(1) to F(0). The sequence is that of ATP synthase subunit b from Corynebacterium diphtheriae (strain ATCC 700971 / NCTC 13129 / Biotype gravis).